Here is a 133-residue protein sequence, read N- to C-terminus: Large ribosomal subunit protein uL15 (133 aa).

The disordered stretch occupies residues 1 to 62; sequence MALHNLQPAP…GQQPLQRRLP (62 aa). The span at 32–45 shows a compositional bias: polar residues; sequence TRGQKGQKSRTGYS.

This sequence belongs to the universal ribosomal protein uL15 family. Part of the 50S ribosomal subunit.

Functionally, binds to the 23S rRNA. In Nitratiruptor sp. (strain SB155-2), this protein is Large ribosomal subunit protein uL15.